Reading from the N-terminus, the 245-residue chain is 1-(5-phosphoribosyl)-5-[(5-phosphoribosylamino)methylideneamino] imidazole-4-carboxamide isomerase (245 aa).

Asp10 acts as the Proton acceptor in catalysis. Asp129 (proton donor) is an active-site residue.

The protein belongs to the HisA/HisF family.

Its subcellular location is the cytoplasm. The enzyme catalyses 1-(5-phospho-beta-D-ribosyl)-5-[(5-phospho-beta-D-ribosylamino)methylideneamino]imidazole-4-carboxamide = 5-[(5-phospho-1-deoxy-D-ribulos-1-ylimino)methylamino]-1-(5-phospho-beta-D-ribosyl)imidazole-4-carboxamide. It functions in the pathway amino-acid biosynthesis; L-histidine biosynthesis; L-histidine from 5-phospho-alpha-D-ribose 1-diphosphate: step 4/9. The polypeptide is 1-(5-phosphoribosyl)-5-[(5-phosphoribosylamino)methylideneamino] imidazole-4-carboxamide isomerase (Parafrankia sp. (strain EAN1pec)).